The sequence spans 303 residues: Glycine--tRNA ligase alpha subunit (303 aa).

It belongs to the class-II aminoacyl-tRNA synthetase family. Tetramer of two alpha and two beta subunits.

It is found in the cytoplasm. The catalysed reaction is tRNA(Gly) + glycine + ATP = glycyl-tRNA(Gly) + AMP + diphosphate. This chain is Glycine--tRNA ligase alpha subunit, found in Stenotrophomonas maltophilia (strain R551-3).